A 326-amino-acid polypeptide reads, in one-letter code: Glutaredoxin 3 (326 aa).

The Thioredoxin domain occupies 1–108; the sequence is MANFTDAASL…LTNKVQRLGS (108 aa). 2 Glutaredoxin domains span residues 125 to 227 and 227 to 326; these read NQRL…VSLE and ENRL…KGEN. Cys-150 and Cys-252 together coordinate [2Fe-2S] cluster.

As to quaternary structure, homodimer; the homodimer is independent of 2Fe-2S clusters. Heterotrimer; forms a heterotrimeric complex composed by two bola2 molecules and one glrx3 molecule; linked by [2Fe-2S] clusters.

It is found in the cytoplasm. The protein localises to the cytosol. In terms of biological role, together with bola2, acts as a cytosolic iron-sulfur (Fe-S) cluster assembly factor that facilitates [2Fe-2S] cluster insertion into a subset of cytosolic proteins. Required for hemoglobin maturation. Does not possess any thyoredoxin activity since it lacks the conserved motif that is essential for catalytic activity. The chain is Glutaredoxin 3 (glrx3) from Danio rerio (Zebrafish).